A 136-amino-acid polypeptide reads, in one-letter code: Small ribosomal subunit protein uS9 (136 aa).

Over residues 103-116 (PLKTEGHLSRDPRA) the composition is skewed to basic and acidic residues. The interval 103–136 (PLKTEGHLSRDPRAKERRKYGLKKARKAPQFSKR) is disordered. A compositionally biased stretch (basic residues) spans 117–136 (KERRKYGLKKARKAPQFSKR).

The protein belongs to the universal ribosomal protein uS9 family.

The polypeptide is Small ribosomal subunit protein uS9 (rpsI) (Prochlorococcus marinus (strain SARG / CCMP1375 / SS120)).